The primary structure comprises 28 residues: Potassium channel toxin alpha-KTx 9.5 (28 aa).

Cystine bridges form between Cys-3–Cys-19, Cys-6–Cys-24, and Cys-10–Cys-26. A Valine amide modification is found at Val-28.

As to expression, expressed by the venom gland.

It is found in the secreted. Functionally, blocks voltage-gated potassium channels Kv1.1/KCNA1 (IC(50)=145 nM), Kv1.2/KCNA2 (IC(50)=2.5 nM), and Kv1.3/KCNA3 (IC(50)=15). Also inhibits calcium-activated potassium channels (KCa/KCNN). This is Potassium channel toxin alpha-KTx 9.5 from Buthus occitanus tunetanus (Common European scorpion).